Here is a 292-residue protein sequence, read N- to C-terminus: 33 kDa chaperonin (292 aa).

Cystine bridges form between cysteine 230-cysteine 232 and cysteine 263-cysteine 266.

Belongs to the HSP33 family. Under oxidizing conditions two disulfide bonds are formed involving the reactive cysteines. Under reducing conditions zinc is bound to the reactive cysteines and the protein is inactive.

It localises to the cytoplasm. Its function is as follows. Redox regulated molecular chaperone. Protects both thermally unfolding and oxidatively damaged proteins from irreversible aggregation. Plays an important role in the bacterial defense system toward oxidative stress. In Salmonella typhi, this protein is 33 kDa chaperonin.